A 485-amino-acid polypeptide reads, in one-letter code: Hydrogenase transcriptional regulatory protein HoxA (485 aa).

The Response regulatory domain occupies 6–120; the sequence is TILVVDDEVR…QLVETVKEAV (115 aa). At Asp-54 the chain carries 4-aspartylphosphate. The region spanning 166-392 is the Sigma-54 factor interaction domain; the sequence is STESPMHAVI…ELQNEIQRMA (227 aa). ATP contacts are provided by residues 192 to 199 and 264 to 273; these read GESGTGKE and EIGETSPAFQ. Residues 404 to 426 form a disordered region; the sequence is PLLGRRNGKRSAPLPAHGRLNGS. A DNA-binding region (H-T-H motif) is located at residues 451 to 470; that stretch reads NISRVASELGLSRVGLRNKL.

It localises to the cytoplasm. Functionally, probable member of the two-component regulatory system involved in the regulation of the hydrogenase activity. HoxA is probably phosphorylated by a sensory component (which could be HoxX) and then acts in conjunction with sigma-54 as a transcriptional activator. The chain is Hydrogenase transcriptional regulatory protein HoxA (hoxA) from Bradyrhizobium diazoefficiens (strain JCM 10833 / BCRC 13528 / IAM 13628 / NBRC 14792 / USDA 110).